A 242-amino-acid polypeptide reads, in one-letter code: Enolase-phosphatase E1 (242 aa).

The protein belongs to the HAD-like hydrolase superfamily. MasA/MtnC family. As to quaternary structure, monomer. Requires Mg(2+) as cofactor.

The catalysed reaction is 5-methylsulfanyl-2,3-dioxopentyl phosphate + H2O = 1,2-dihydroxy-5-(methylsulfanyl)pent-1-en-3-one + phosphate. Its pathway is amino-acid biosynthesis; L-methionine biosynthesis via salvage pathway; L-methionine from S-methyl-5-thio-alpha-D-ribose 1-phosphate: step 3/6. It participates in amino-acid biosynthesis; L-methionine biosynthesis via salvage pathway; L-methionine from S-methyl-5-thio-alpha-D-ribose 1-phosphate: step 4/6. Its function is as follows. Bifunctional enzyme that catalyzes the enolization of 2,3-diketo-5-methylthiopentyl-1-phosphate (DK-MTP-1-P) into the intermediate 2-hydroxy-3-keto-5-methylthiopentenyl-1-phosphate (HK-MTPenyl-1-P), which is then dephosphorylated to form the acireductone 1,2-dihydroxy-3-keto-5-methylthiopentene (DHK-MTPene). This chain is Enolase-phosphatase E1, found in Synechococcus sp. (strain WH7803).